The sequence spans 690 residues: Methionine--tRNA ligase (690 aa).

The short motif at 20–30 (PYANGSIHLGH) is the 'HIGH' region element. Zn(2+) contacts are provided by C151, C154, C164, and C167. Residues 337–341 (KMSKS) carry the 'KMSKS' region motif. An ATP-binding site is contributed by K340. Residues 589–690 (DFAKVDLRIA…EGAQPGMRVM (102 aa)) form the tRNA-binding domain.

Belongs to the class-I aminoacyl-tRNA synthetase family. MetG type 1 subfamily. In terms of assembly, homodimer. Zn(2+) is required as a cofactor.

Its subcellular location is the cytoplasm. It carries out the reaction tRNA(Met) + L-methionine + ATP = L-methionyl-tRNA(Met) + AMP + diphosphate. Its function is as follows. Is required not only for elongation of protein synthesis but also for the initiation of all mRNA translation through initiator tRNA(fMet) aminoacylation. This is Methionine--tRNA ligase from Vibrio vulnificus (strain CMCP6).